Here is a 225-residue protein sequence, read N- to C-terminus: NAD(P)H-hydrate epimerase (225 aa).

Residues 9-209 (MQTIDNYTVE…DIGLLTPQDF (201 aa)) enclose the YjeF N-terminal domain. Residue 57–61 (NNGAD) participates in (6S)-NADPHX binding. Residues asparagine 58 and aspartate 119 each coordinate K(+). (6S)-NADPHX-binding positions include 123 to 129 (GTGLNNL) and aspartate 152. Threonine 155 provides a ligand contact to K(+).

Belongs to the NnrE/AIBP family. K(+) is required as a cofactor.

The catalysed reaction is (6R)-NADHX = (6S)-NADHX. It carries out the reaction (6R)-NADPHX = (6S)-NADPHX. Functionally, catalyzes the epimerization of the S- and R-forms of NAD(P)HX, a damaged form of NAD(P)H that is a result of enzymatic or heat-dependent hydration. This is a prerequisite for the S-specific NAD(P)H-hydrate dehydratase to allow the repair of both epimers of NAD(P)HX. In Leuconostoc kimchii (strain IMSNU 11154 / KCTC 2386 / IH25), this protein is NAD(P)H-hydrate epimerase.